The following is a 2144-amino-acid chain: Alpha-protein kinase 2 (2144 aa).

The region spanning 7–105 (PERRTLCFLS…ICCSASLEVQ (99 aa)) is the Ig-like 1 domain. Cys33 and Cys98 are oxidised to a cystine. 11 disordered regions span residues 425 to 473 (ETAK…LQTM), 500 to 575 (SLAR…GAPG), 727 to 775 (EDNE…NVGS), 845 to 864 (QTQG…DGKS), 881 to 907 (EASE…TLPY), 1011 to 1065 (SCEA…PEGQ), 1316 to 1340 (DPVE…EMEM), 1471 to 1509 (GPGE…ETEV), 1565 to 1587 (CGNH…PKGN), 1629 to 1696 (ECES…GSGH), and 1720 to 1754 (ENSR…PCKA). Over residues 500 to 511 (SLARERTDEKYP) the composition is skewed to basic and acidic residues. Residues 853 to 864 (RSTDKRSQDGKS) are compositionally biased toward basic and acidic residues. Positions 897 to 906 (PPSTFSSTLP) are enriched in polar residues. A compositionally biased stretch (polar residues) spans 1574–1587 (DLTNTPCTSSPKGN). 2 stretches are compositionally biased toward basic and acidic residues: residues 1631–1645 (ESEK…RDPC) and 1732–1754 (PKFE…PCKA). The Ig-like 2 domain maps to 1759 to 1847 (PVLLKRIQAE…GKVTAEFNLT (89 aa)). A disulfide bridge connects residues Cys1781 and Cys1831. Residues 1874 to 2106 (KEDVFNDSYF…YCKMLGLKSL (233 aa)) enclose the Alpha-type protein kinase domain. The disordered stretch occupies residues 2109-2144 (NSQKPKKPIVGKGRVPTNATQVKTPESETPPAERKT).

It belongs to the protein kinase superfamily. Alpha-type protein kinase family. ALPK subfamily.

The protein resides in the basolateral cell membrane. It catalyses the reaction L-seryl-[protein] + ATP = O-phospho-L-seryl-[protein] + ADP + H(+). The enzyme catalyses L-threonyl-[protein] + ATP = O-phospho-L-threonyl-[protein] + ADP + H(+). Its function is as follows. Protein kinase that recognizes phosphorylation sites in which the surrounding peptides have an alpha-helical conformation. Regulates cardiac development and cardiomyocyte differentiation by negatively regulating Wnt/beta-catenin signaling. The chain is Alpha-protein kinase 2 from Mus musculus (Mouse).